The following is a 274-amino-acid chain: Penicillin-insensitive murein endopeptidase (274 aa).

An N-terminal signal peptide occupies residues 1 to 19; the sequence is MNKTAIALLALLASSVSLA. Cystine bridges form between C44-C265, C187-C235, and C216-C223. Zn(2+)-binding residues include H110, H113, D120, D147, H150, and H211. Positions 227–274 are disordered; sequence PLPPPGDGCGAELQSWFEPPKPGTTKPEKKTPPPLPPSCQALLDEHVI.

The protein belongs to the peptidase M74 family. Dimer. Zn(2+) is required as a cofactor.

Its subcellular location is the periplasm. In terms of biological role, murein endopeptidase that cleaves the D-alanyl-meso-2,6-diamino-pimelyl amide bond that connects peptidoglycan strands. Likely plays a role in the removal of murein from the sacculus. This is Penicillin-insensitive murein endopeptidase from Escherichia coli O157:H7.